The sequence spans 50 residues: Large ribosomal subunit protein eL39 (50 aa).

This sequence belongs to the eukaryotic ribosomal protein eL39 family.

The protein is Large ribosomal subunit protein eL39 of Methanosphaerula palustris (strain ATCC BAA-1556 / DSM 19958 / E1-9c).